The following is a 274-amino-acid chain: ATP synthase subunit delta (274 aa).

The protein belongs to the ATPase delta chain family. As to quaternary structure, F-type ATPases have 2 components, F(1) - the catalytic core - and F(0) - the membrane proton channel. F(1) has five subunits: alpha(3), beta(3), gamma(1), delta(1), epsilon(1). F(0) has three main subunits: a(1), b(2) and c(10-14). The alpha and beta chains form an alternating ring which encloses part of the gamma chain. F(1) is attached to F(0) by a central stalk formed by the gamma and epsilon chains, while a peripheral stalk is formed by the delta and b chains.

The protein localises to the cell membrane. F(1)F(0) ATP synthase produces ATP from ADP in the presence of a proton or sodium gradient. F-type ATPases consist of two structural domains, F(1) containing the extramembraneous catalytic core and F(0) containing the membrane proton channel, linked together by a central stalk and a peripheral stalk. During catalysis, ATP synthesis in the catalytic domain of F(1) is coupled via a rotary mechanism of the central stalk subunits to proton translocation. In terms of biological role, this protein is part of the stalk that links CF(0) to CF(1). It either transmits conformational changes from CF(0) to CF(1) or is implicated in proton conduction. The polypeptide is ATP synthase subunit delta (Acidothermus cellulolyticus (strain ATCC 43068 / DSM 8971 / 11B)).